The chain runs to 152 residues: ALK and LTK ligand 2 (152 aa).

The N-terminal stretch at 1-24 (MRGPGHPLLLGLLLVLGAAGRGRG) is a signal peptide. 2 disulfides stabilise this stretch: Cys-111/Cys-147 and Cys-125/Cys-134.

The protein belongs to the ALKAL family. In terms of assembly, homodimer; interchain disulfide bond is not required for homodimerization. As to expression, widely expressed with highest levels in adrenal gland and modest levels in pancreas, testis and uterus.

Its subcellular location is the secreted. It is found in the cell membrane. Its function is as follows. Cytokine that acts as a physiological ligand for receptor tyrosine kinases LTK and ALK, leading to their activation. Cytokine-binding is sufficient to activate LTK. In contrast, ALKAL2-driven activation of ALK is coupled with heparin-binding to ALK. Stimulation of ALK signaling is involved in neural development and regulation of energy expenditure. The protein is ALK and LTK ligand 2 of Homo sapiens (Human).